The following is a 431-amino-acid chain: MGNNIKVTFNPDKIAAWWPAVGTYYTTTYPQNQSVFQPGIYQTTSLINPKNQQELDSVLINRYKQIDWNTWQGFPVDQKFSLVSRDPPPKPYINQSAQTFEIKPGPIIVPGIRDIPRGLVPPQTPTNRDQGRKPTPPTPPLRDTHPHLTMKNQTFHLQGFVDGLRDLTTTERQHNAYGDPFTTLSPAVPTVSTILSPPSTTGDPALSPEMSPSSLLGLLAGLQVVYFLWTKILTIAQNLDWWWTSLSFPGGIPECTGQNSQFQTCKHLPTSCPPTCNGFRWMYLRRFIIYLLVLLLCLIFLLVLLDWKGFIPVCPLQPTTETTVNCRQCTISAQDMYTPPYCCCLKPTAGNCTCWPIPSSWALGNYLWEWALARFSWLNLLVPLLQWLGGISLIAWFLLIWMIWFWGPALLSILPPFIPIFVLFFLIWVYI.

A lipid anchor (N-myristoyl glycine; by host) is attached at glycine 2. A pre-S1 region spans residues 2-148; sequence GNNIKVTFNP…PPLRDTHPHL (147 aa). The pre-S stretch occupies residues 2–207; that stretch reads GNNIKVTFNP…PSTTGDPALS (206 aa). Residues 2-214 lie on the Virion surface; in external conformation side of the membrane; the sequence is GNNIKVTFNP…ALSPEMSPSS (213 aa). The Intravirion; in internal conformation portion of the chain corresponds to 2–286; that stretch reads GNNIKVTFNP…NGFRWMYLRR (285 aa). N-linked (GlcNAc...) asparagine glycosylation is present at asparagine 3. The segment at 115–147 is disordered; it reads IPRGLVPPQTPTNRDQGRKPTPPTPPLRDTHPH. The segment at 149–207 is pre-S2; that stretch reads TMKNQTFHLQGFVDGLRDLTTTERQHNAYGDPFTTLSPAVPTVSTILSPPSTTGDPALS. The helical transmembrane segment at 215-235 threads the bilayer; the sequence is LLGLLAGLQVVYFLWTKILTI. The Intravirion; in external conformation segment spans residues 236–286; it reads AQNLDWWWTSLSFPGGIPECTGQNSQFQTCKHLPTSCPPTCNGFRWMYLRR. The chain crosses the membrane as a helical span at residues 287-307; it reads FIIYLLVLLLCLIFLLVLLDW. Topologically, residues 308 to 379 are virion surface; it reads KGFIPVCPLQ…WALARFSWLN (72 aa). N-linked (GlcNAc...) asparagine; by host glycosylation is present at asparagine 351. Residues 380–400 form a helical membrane-spanning segment; the sequence is LLVPLLQWLGGISLIAWFLLI. Residues 401 to 406 lie on the Intravirion side of the membrane; that stretch reads WMIWFW. The helical transmembrane segment at 407–429 threads the bilayer; sequence GPALLSILPPFIPIFVLFFLIWV. The Virion surface segment spans residues 430–431; sequence YI.

This sequence belongs to the orthohepadnavirus major surface antigen family. In terms of assembly, in its internal form (Li-HBsAg), interacts with the capsid protein and with the isoform S. Interacts with host chaperone CANX. As to quaternary structure, associates with host chaperone CANX through its pre-S2 N glycan; this association may be essential for isoform M proper secretion. Interacts with isoform L. Interacts with the antigens of satellite virus HDV (HDVAgs); this interaction is required for encapsidation of HDV genomic RNA. Post-translationally, isoform M is N-terminally acetylated by host at a ratio of 90%, and N-glycosylated by host at the pre-S2 region. In terms of processing, myristoylated.

The protein localises to the virion membrane. Its function is as follows. The large envelope protein exists in two topological conformations, one which is termed 'external' or Le-HBsAg and the other 'internal' or Li-HBsAg. In its external conformation the protein attaches the virus to cell receptors and thereby initiating infection. This interaction determines the species specificity and liver tropism. This attachment induces virion internalization predominantly through caveolin-mediated endocytosis. The large envelope protein also assures fusion between virion membrane and endosomal membrane. In its internal conformation the protein plays a role in virion morphogenesis and mediates the contact with the nucleocapsid like a matrix protein. The middle envelope protein plays an important role in the budding of the virion. It is involved in the induction of budding in a nucleocapsid independent way. In this process the majority of envelope proteins bud to form subviral lipoprotein particles of 22 nm of diameter that do not contain a nucleocapsid. This is Large envelope protein from Marmota monax (Woodchuck).